The primary structure comprises 425 residues: tRNA (guanine-N(7)-)-methyltransferase non-catalytic subunit wuho (425 aa).

Residues 67-102 are disordered; sequence ATCAGKEPGGKEQQLTKQPEEGGTTASGSGVTSTSV. The span at 88 to 102 shows a compositional bias: low complexity; it reads GGTTASGSGVTSTSV. WD repeat units follow at residues 97–138, 142–181, 185–224, 228–266, and 325–365; these read VTST…ARLL, PLARAASAVRFCSDSSSVLVTDKTGDCYQYDCVELEAPPR, GHLSVVYDILWSEDQQHIITCDRDDKIRVTNYPATFDIHS, GHREFVSGLALLTDKHIASASGDKTLRVWNYIQGKELLQ, and AGSW…PATS.

It belongs to the WD repeat TRM82 family. In terms of assembly, forms a heterodimer with the catalytic subunit Mettl1. Interacts with mei-P26 and weakly interacts with bgcn; required for the function or formation of the mei-P26-bgcn-bam-sxl complex. Interacts with nanos; may be involved in mei-P26-dependent derepression of the BMP signaling pathway. Interacts with Myc; the interaction may be mediated by mei-P26 and may be involved in the regulation of ribosome biogenesis. In terms of tissue distribution, in testis, it is present at high level in hub cells, a niche for germline stem cells of testis. Ubiquitously expressed in all testicular cells throughout spermatogenesis. Ubiquitously expressed in all germline and somatic cells of the ovary.

It localises to the nucleus. The protein resides in the cytoplasm. It participates in tRNA modification; N(7)-methylguanine-tRNA biosynthesis. Functionally, required for the Mettl1-dependent formation of N(7)-methylguanine at position 46 (m7G46) in tRNA. In the Mettl1-wuho methyltransferase complex, it is required to stabilize and induce conformational changes of the catalytic subunit. Required for binding of nanos mRNA and repression of translation by the mei-P26-bgcn-bam-sxl complex. May cooperate with mei-P26 and nanos to derepress the BMP signaling pathway. May cooperate with mei-P26 to suppress expression of a subset of microRNAs. May cooperate with mei-P26 to regulate bam expression levels in germline cells during gametogenesis. Required to promote mitosis to meiosis transition during gametogenesis. May regulate germline cell division in part by regulating ribosome biogenesis. The chain is tRNA (guanine-N(7)-)-methyltransferase non-catalytic subunit wuho from Drosophila yakuba (Fruit fly).